We begin with the raw amino-acid sequence, 215 residues long: MSKVYDWFEERLEIQAIADDITSKYVPPHVNIFYCLGGITLTCFLVQVATGFAMTFYYRPTVTEAFASVQYIMTEANFGWLIRSVHRWSASMMVLMMILHVFRVYLTGGFKKPRELTWVTGVVLGVLTATFGVTGYSLPWDQIGYWAVKFVTGVPDAIPVIGSSXVELLPASASVGQSTLTRFYSLHTFVLPLLTAVFMLMHFLMIRKQGIFGPL.

Residues 32–52 traverse the membrane as a helical segment; the sequence is IFYCLGGITLTCFLVQVATGF. Cys35 lines the heme c pocket. Residues His86 and His100 each coordinate heme b. 3 consecutive transmembrane segments (helical) span residues 90 to 110, 116 to 136, and 186 to 206; these read ASMMVLMMILHVFRVYLTGGF, LTWVTGVVLGVLTATFGVTGY, and LHTFVLPLLTAVFMLMHFLMI. Heme b contacts are provided by His187 and His202.

This sequence belongs to the cytochrome b family. PetB subfamily. In terms of assembly, the 4 large subunits of the cytochrome b6-f complex are cytochrome b6, subunit IV (17 kDa polypeptide, PetD), cytochrome f and the Rieske protein, while the 4 small subunits are PetG, PetL, PetM and PetN. The complex functions as a dimer. The cofactor is heme b. It depends on heme c as a cofactor.

Its subcellular location is the plastid. The protein localises to the chloroplast thylakoid membrane. In terms of biological role, component of the cytochrome b6-f complex, which mediates electron transfer between photosystem II (PSII) and photosystem I (PSI), cyclic electron flow around PSI, and state transitions. This chain is Cytochrome b6, found in Pisum sativum (Garden pea).